The primary structure comprises 181 residues: MSDIKIEEKPDGLEGPGFFATSLDSVIGLARKNSLWPLPFATSCCGIEFMATMASTYDIARFGAERPSFSPRQADVLLVMGTIAKKMGPVLRHVYEQMAEPKWVVAVGACASSGGIFDTYSVLQGIDRIIPVDVYVPGCPPRPEQIIQGLMRVQDLASTESLRRRESPEYKALLAKYEIEE.

4 residues coordinate [4Fe-4S] cluster: C44, C45, C110, and C139.

This sequence belongs to the complex I 20 kDa subunit family. In terms of assembly, NDH-1 is composed of 14 different subunits. Subunits NuoB, C, D, E, F, and G constitute the peripheral sector of the complex. The cofactor is [4Fe-4S] cluster.

It localises to the cell inner membrane. It carries out the reaction a quinone + NADH + 5 H(+)(in) = a quinol + NAD(+) + 4 H(+)(out). Functionally, NDH-1 shuttles electrons from NADH, via FMN and iron-sulfur (Fe-S) centers, to quinones in the respiratory chain. The immediate electron acceptor for the enzyme in this species is believed to be a menaquinone. Couples the redox reaction to proton translocation (for every two electrons transferred, four hydrogen ions are translocated across the cytoplasmic membrane), and thus conserves the redox energy in a proton gradient. In Cytophaga hutchinsonii (strain ATCC 33406 / DSM 1761 / CIP 103989 / NBRC 15051 / NCIMB 9469 / D465), this protein is NADH-quinone oxidoreductase subunit B 2.